A 40-amino-acid chain; its full sequence is Photosystem II reaction center protein J (40 aa).

The helical transmembrane segment at 8 to 28 threads the bilayer; sequence IPLWLIGTVAGIPVIGLVGVF.

It belongs to the PsbJ family. In terms of assembly, PSII is composed of 1 copy each of membrane proteins PsbA, PsbB, PsbC, PsbD, PsbE, PsbF, PsbH, PsbI, PsbJ, PsbK, PsbL, PsbM, PsbT, PsbX, PsbY, PsbZ, Psb30/Ycf12, at least 3 peripheral proteins of the oxygen-evolving complex and a large number of cofactors. It forms dimeric complexes.

It is found in the plastid. It localises to the chloroplast thylakoid membrane. In terms of biological role, one of the components of the core complex of photosystem II (PSII). PSII is a light-driven water:plastoquinone oxidoreductase that uses light energy to abstract electrons from H(2)O, generating O(2) and a proton gradient subsequently used for ATP formation. It consists of a core antenna complex that captures photons, and an electron transfer chain that converts photonic excitation into a charge separation. The sequence is that of Photosystem II reaction center protein J from Hordeum jubatum (Foxtail barley).